The chain runs to 205 residues: DNA-directed RNA polymerases IV and V subunit 4 (205 aa).

Residues 1-79 (MSEKGGKGLK…TKSSKNSLHS (79 aa)) are disordered. A compositionally biased stretch (polar residues) spans 48 to 60 (NVSSDQQPFQSSA).

Belongs to the eukaryotic RPB4 RNA polymerase subunit family. Component of the RNA polymerase IV and V complexes. Interacts with NRPD1 and NRPE1. Expressed in shoot meristematic region and in root tips. Detected in cotyledons, flowers and young leaves.

The protein localises to the nucleus. Functionally, DNA-dependent RNA polymerase catalyzes the transcription of DNA into RNA using the four ribonucleoside triphosphates as substrates. Component of RNA polymerases IV and V which mediate short-interfering RNAs (siRNA) accumulation and subsequent RNA-directed DNA methylation-dependent (RdDM) transcriptional gene silencing (TGS) of endogenous repeated sequences, including transposable elements. Required for the de novo DNA methylation directed by the RdDM pathway. This Arabidopsis thaliana (Mouse-ear cress) protein is DNA-directed RNA polymerases IV and V subunit 4 (NRPD4).